Here is a 99-residue protein sequence, read N- to C-terminus: Small ribosomal subunit protein uS19 (99 aa).

The segment at 77 to 99 (TRTFHGHSGDKKAKVAKGGPGGR) is disordered.

The protein belongs to the universal ribosomal protein uS19 family.

Protein S19 forms a complex with S13 that binds strongly to the 16S ribosomal RNA. In Sorangium cellulosum (strain So ce56) (Polyangium cellulosum (strain So ce56)), this protein is Small ribosomal subunit protein uS19.